A 222-amino-acid polypeptide reads, in one-letter code: MIF4G domain-containing protein (222 aa).

The region spanning 3–205 (EPSREEYKIQ…LEIIEFRAAG (203 aa)) is the MIF4G domain.

It belongs to the MIF4GD family. In terms of assembly, interacts with EIF4G1, EIF4G2 and SLBP; probably tethered by SLBP to the 3'-end of mRNAs ending with the histone stem-loop, it also interacts with EIF4G1 which is bound to their 5'-end.

It localises to the cytoplasm. Its subcellular location is the nucleus. In terms of biological role, functions in replication-dependent translation of histone mRNAs which differ from other eukaryotic mRNAs in that they do not end with a poly-A tail but a stem-loop. May participate in circularizing those mRNAs specifically enhancing their translation. The polypeptide is MIF4G domain-containing protein (MIF4GD) (Homo sapiens (Human)).